The sequence spans 386 residues: Protein phosphatase methylesterase 1 (386 aa).

The interval 1–38 is disordered; sequence MSALEKSMHLGRLPSRPPLPGSGGSQSGAKMRMGPGRK. Ser15 bears the Phosphoserine mark. Arg16 bears the Asymmetric dimethylarginine; alternate mark. The residue at position 16 (Arg16) is an Omega-N-methylarginine; alternate. Residue Ser156 is part of the active site. The span at 255–265 shows a compositional bias: acidic residues; it reads IEEEEEDEEGS. A disordered region spans residues 255–280; sequence IEEEEEDEEGSESVNKRKKEDDMETK. The segment covering 268–280 has biased composition (basic and acidic residues); that stretch reads VNKRKKEDDMETK. The active site involves His349.

Belongs to the AB hydrolase superfamily. As to quaternary structure, binds PPP2CA and PPP2CB. Phosphorylated by SIK1 following increases in intracellular sodium, leading to dissociation from the protein phosphatase 2A (PP2A) complex and subsequent dephosphorylation of sodium/potassium-transporting ATPase ATP1A1.

The enzyme catalyses [phosphatase 2A protein]-C-terminal L-leucine methyl ester + H2O = [phosphatase 2A protein]-C-terminal L-leucine + methanol + H(+). Demethylates proteins that have been reversibly carboxymethylated. Demethylates PPP2CB (in vitro) and PPP2CA. Binding to PPP2CA displaces the manganese ion and inactivates the enzyme. The polypeptide is Protein phosphatase methylesterase 1 (Ppme1) (Rattus norvegicus (Rat)).